The following is a 399-amino-acid chain: Bombesin receptor subtype-3 (399 aa).

The Extracellular segment spans residues 1–41; that stretch reads MSQRQPQSPNQTLISITNDTETSSSAVSNDTTPKGWTGDNS. Asn10, Asn18, and Asn29 each carry an N-linked (GlcNAc...) asparagine glycan. Residues 42–63 form a helical membrane-spanning segment; the sequence is PGIEALCAIYITYAVIISVGIL. The Cytoplasmic segment spans residues 64-82; that stretch reads GNAILIKVFFKTKSMQTVP. The helical transmembrane segment at 83–103 threads the bilayer; the sequence is NIFITSLAFGDLLLLLTCVPV. The Extracellular portion of the chain corresponds to 104 to 121; the sequence is DATHYLAEGWLFGKVGCK. An intrachain disulfide couples Cys120 to Cys203. Residues 122–143 form a helical membrane-spanning segment; the sequence is VLSFIRLTSVGVSVFTLTILSA. Residues 144 to 163 lie on the Cytoplasmic side of the membrane; it reads DRYKAVVKPLERQPSNAILK. The helical transmembrane segment at 164–184 threads the bilayer; sequence TCAKAGGIWIMAMIFALPEAI. Over 185-220 the chain is Extracellular; sequence FSNVYTFQDPNRNVTFESCNSYPISERLLQEIHSLL. Residues 221–241 traverse the membrane as a helical segment; that stretch reads CFLVFYIIPLSIISVYYSLIA. Residues 242-272 are Cytoplasmic-facing; it reads RTLYKSTLNIPTEEQSHARKQIESRKRIAKT. A helical membrane pass occupies residues 273-293; the sequence is VLVLVALFALCWLPNHLLYLY. Residues 294 to 313 lie on the Extracellular side of the membrane; sequence HSFTYESYAEPSDVPFVVTI. A helical transmembrane segment spans residues 314-333; it reads FSRVLAFSNSCVNPFALYWL. Topologically, residues 334–399 are cytoplasmic; sequence SKTFQKHFKA…STAKKGEDKV (66 aa). Cys347 carries S-palmitoyl cysteine lipidation.

This sequence belongs to the G-protein coupled receptor 1 family. In terms of assembly, interacts with C6orf89.

It localises to the cell membrane. Functionally, role in sperm cell division, maturation, or function. This receptor mediates its action by association with G proteins that activate a phosphatidylinositol-calcium second messenger system. The polypeptide is Bombesin receptor subtype-3 (Brs3) (Rattus norvegicus (Rat)).